A 276-amino-acid chain; its full sequence is Large ribosomal subunit protein uL2 (276 aa).

Disordered regions lie at residues 1 to 20 (MGIKKYNPTTNGRRNMTTND) and 219 to 276 (TVRG…RRKK). A compositionally biased stretch (polar residues) spans 7-20 (NPTTNGRRNMTTND).

Belongs to the universal ribosomal protein uL2 family. As to quaternary structure, part of the 50S ribosomal subunit. Forms a bridge to the 30S subunit in the 70S ribosome.

Its function is as follows. One of the primary rRNA binding proteins. Required for association of the 30S and 50S subunits to form the 70S ribosome, for tRNA binding and peptide bond formation. It has been suggested to have peptidyltransferase activity; this is somewhat controversial. Makes several contacts with the 16S rRNA in the 70S ribosome. In Bacillus cereus (strain G9842), this protein is Large ribosomal subunit protein uL2.